The primary structure comprises 276 residues: Homeobox protein TOS8 (276 aa).

A compositionally biased stretch (polar residues) spans 176–185 (NSVRGSNNGY). A disordered region spans residues 176–199 (NSVRGSNNGYSAKEKKHKAHGKRS). The segment covering 189 to 199 (EKKHKAHGKRS) has biased composition (basic residues). The segment at residues 194–256 (AHGKRSNLPK…NARRRKIFSG (63 aa)) is a DNA-binding region (homeobox; TALE-type).

Belongs to the TALE/CUP9 homeobox family.

The protein localises to the nucleus. This Saccharomyces cerevisiae (strain ATCC 204508 / S288c) (Baker's yeast) protein is Homeobox protein TOS8 (TOS8).